We begin with the raw amino-acid sequence, 318 residues long: Biotin synthase (318 aa).

The region spanning 44 to 273 is the Radical SAM core domain; sequence LCGNKFDLCT…TVQIRLAGGR (230 aa). The [4Fe-4S] cluster site is built by cysteine 62, cysteine 66, and cysteine 69. [2Fe-2S] cluster is bound by residues serine 106, cysteine 138, cysteine 198, and arginine 268.

It belongs to the radical SAM superfamily. Biotin synthase family. Homodimer. [4Fe-4S] cluster serves as cofactor. Requires [2Fe-2S] cluster as cofactor.

It catalyses the reaction (4R,5S)-dethiobiotin + (sulfur carrier)-SH + 2 reduced [2Fe-2S]-[ferredoxin] + 2 S-adenosyl-L-methionine = (sulfur carrier)-H + biotin + 2 5'-deoxyadenosine + 2 L-methionine + 2 oxidized [2Fe-2S]-[ferredoxin]. Its pathway is cofactor biosynthesis; biotin biosynthesis; biotin from 7,8-diaminononanoate: step 2/2. Catalyzes the conversion of dethiobiotin (DTB) to biotin by the insertion of a sulfur atom into dethiobiotin via a radical-based mechanism. This chain is Biotin synthase, found in Clostridium botulinum (strain Hall / ATCC 3502 / NCTC 13319 / Type A).